Consider the following 270-residue polypeptide: Very long chain fatty acid elongase 3 (270 aa).

Residue asparagine 6 is glycosylated (N-linked (GlcNAc...) asparagine). Helical transmembrane passes span 29–49 (FFEE…VLIA) and 63–83 (LQGP…LGAV). Asparagine 110 is a glycosylation site (N-linked (GlcNAc...) asparagine). The next 5 helical transmembrane spans lie at 115-135 (FWSW…AFII), 140-160 (PLIF…SFGY), 164-184 (VPAG…MYTY), 198-218 (LPML…IVSI), and 235-255 (HLFW…HFFC). Residues 266–270 (KTKSQ) carry the Di-lysine motif motif.

This sequence belongs to the ELO family. ELOVL3 subfamily. Interacts with TECR. N-Glycosylated. In terms of tissue distribution, testis.

The protein resides in the endoplasmic reticulum membrane. The catalysed reaction is a very-long-chain acyl-CoA + malonyl-CoA + H(+) = a very-long-chain 3-oxoacyl-CoA + CO2 + CoA. It catalyses the reaction eicosanoyl-CoA + malonyl-CoA + H(+) = 3-oxodocosanoyl-CoA + CO2 + CoA. It carries out the reaction hexadecanoyl-CoA + malonyl-CoA + H(+) = 3-oxooctadecanoyl-CoA + CO2 + CoA. The enzyme catalyses octadecanoyl-CoA + malonyl-CoA + H(+) = 3-oxoeicosanoyl-CoA + CO2 + CoA. The catalysed reaction is (9Z)-octadecenoyl-CoA + malonyl-CoA + H(+) = 3-oxo-(11Z)-eicosenoyl-CoA + CO2 + CoA. It catalyses the reaction (9Z,12Z)-octadecadienoyl-CoA + malonyl-CoA + H(+) = (11Z,14Z)-3-oxoicosa-11,14-dienoyl-CoA + CO2 + CoA. It carries out the reaction (9Z,12Z,15Z)-octadecatrienoyl-CoA + malonyl-CoA + H(+) = (11Z,14Z,17Z)-3-oxoeicosatrienoyl-CoA + CO2 + CoA. The enzyme catalyses docosanoyl-CoA + malonyl-CoA + H(+) = 3-oxotetracosanoyl-CoA + CO2 + CoA. The catalysed reaction is tetradecanoyl-CoA + malonyl-CoA + H(+) = 3-oxohexadecanoyl-CoA + CO2 + CoA. Its pathway is lipid metabolism; polyunsaturated fatty acid biosynthesis. Catalyzes the first and rate-limiting reaction of the four reactions that constitute the long-chain fatty acids elongation cycle. This endoplasmic reticulum-bound enzymatic process allows the addition of 2 carbons to the chain of long- and very long-chain fatty acids (VLCFAs) per cycle. Condensing enzyme that exhibits activity toward saturated and unsaturated acyl-CoA substrates with higher activity toward C18 acyl-CoAs, especially C18:0 acyl-CoAs. May participate in the production of saturated and monounsaturated VLCFAs of different chain lengths that are involved in multiple biological processes as precursors of membrane lipids and lipid mediators. The sequence is that of Very long chain fatty acid elongase 3 from Homo sapiens (Human).